Reading from the N-terminus, the 874-residue chain is Lon protease (874 aa).

Residues 18–261 form the Lon N-terminal domain; it reads LPVLPLDDAV…RLLTWTKEHL (244 aa). Disordered stretches follow at residues 47-68, 120-144, and 298-318; these read VDAA…GISS, GGVR…SGAG, and LSEL…EPAD. Over residues 124-142 the composition is skewed to low complexity; the sequence is PAPAGTDTTGTGTADATSG. 430-437 provides a ligand contact to ATP; sequence GPPGVGKT. A Lon proteolytic domain is found at 667–851; that stretch reads TALPGVATGL…REVLDLALEP (185 aa). Residues serine 757 and lysine 800 contribute to the active site. A disordered region spans residues 853 to 874; the sequence is FDADHGGRSPGRAGHSPTALAA.

It belongs to the peptidase S16 family. Homohexamer. Organized in a ring with a central cavity.

The protein resides in the cytoplasm. It carries out the reaction Hydrolysis of proteins in presence of ATP.. ATP-dependent serine protease that mediates the selective degradation of mutant and abnormal proteins as well as certain short-lived regulatory proteins. Required for cellular homeostasis and for survival from DNA damage and developmental changes induced by stress. Degrades polypeptides processively to yield small peptide fragments that are 5 to 10 amino acids long. Binds to DNA in a double-stranded, site-specific manner. The sequence is that of Lon protease from Frankia alni (strain DSM 45986 / CECT 9034 / ACN14a).